Here is a 152-residue protein sequence, read N- to C-terminus: Transcriptional repressor NrdR (152 aa).

Residues 3–34 fold into a zinc finger; the sequence is CPFCNAADSKVIDSRLAAEGCQIRRRRECVSC. The 91-residue stretch at 49-139 folds into the ATP-cone domain; that stretch reads PRVIKSNGKN…VYQDFQDVEA (91 aa).

Belongs to the NrdR family. It depends on Zn(2+) as a cofactor.

Functionally, negatively regulates transcription of bacterial ribonucleotide reductase nrd genes and operons by binding to NrdR-boxes. This chain is Transcriptional repressor NrdR, found in Acinetobacter baumannii (strain AB0057).